The chain runs to 475 residues: E3 ubiquitin-protein ligase TRIM62 (475 aa).

The segment at 11–54 adopts an RING-type zinc-finger fold; the sequence is CSICLSIYQDPVSLGCEHYFCRRCITEHWVRQEAQGARDCPECR. The B box-type zinc finger occupies 88–128; it reads RAARPCQAHDKVKLFCLTDRALLCFFCDEPALHEQHQVTGI. Zn(2+) contacts are provided by C93, H96, C114, and H120. Positions 121–241 form a coiled coil; sequence EQHQVTGIDD…LQERLAETDR (121 aa). The B30.2/SPRY domain maps to 277 to 475; sequence PLQYTIWKSL…QPLRINTVRI (199 aa).

The protein belongs to the TRIM/RBCC family. Interacts with the ubiquitin-conjugating enzyme, UBE2D2. In terms of processing, polyubiquitinated, autoubiquitinated in the presence of UBE2D2.

It is found in the cytoplasm. The enzyme catalyses S-ubiquitinyl-[E2 ubiquitin-conjugating enzyme]-L-cysteine + [acceptor protein]-L-lysine = [E2 ubiquitin-conjugating enzyme]-L-cysteine + N(6)-ubiquitinyl-[acceptor protein]-L-lysine.. The protein operates within protein modification; protein ubiquitination. In terms of biological role, E3 ubiquitin ligase that plays a role in antifungal immunity by mediating 'Lys-27'-linked ubiquitination of CARD9 downstream of C-type lectin receptors; leading to CARD9 activation, followed by activation of NF-kappa-B and MAP kinase p38 pathways. E3 ubiquitin ligase activity is dependent on E2 ubiquitin-conjugating enzyme UBE2D2. This Mus musculus (Mouse) protein is E3 ubiquitin-protein ligase TRIM62.